Consider the following 303-residue polypeptide: MVHIMFNQAAQELTTIRDVLRFAVSRFNEAGLFFGHGTDNAHDEAAYLILHTLNLPLDMLAPYLDAKLLEAEKEEVLTVIERRAVEHIPAAYLTHQAWQGEFDFYVDERVIIPRSFIYELLGDGLRPWIEYDELVHNALDLCTGSGCLAIQMAHHYPDAQIDAVDVSLDALEVAGINVEDYGLEERIRLIHTDLFEGLEGTYDLIVSNPPYVDAESVELLPEEYLHEPELALGSGADGLDATRQILLNAAKFLNPKGVLLVEIGHNRDVLEAAYPELPFTWLETSGGDGFVFLLTREQLLGEE.

Belongs to the protein N5-glutamine methyltransferase family. PrmB subfamily.

The catalysed reaction is L-glutaminyl-[ribosomal protein uL3] + S-adenosyl-L-methionine = N(5)-methyl-L-glutaminyl-[ribosomal protein uL3] + S-adenosyl-L-homocysteine + H(+). Methylates large ribosomal subunit protein uL3 on a specific glutamine residue. This Neisseria meningitidis serogroup A / serotype 4A (strain DSM 15465 / Z2491) protein is Ribosomal protein uL3 glutamine methyltransferase.